A 329-amino-acid polypeptide reads, in one-letter code: uncharacterized protein (329 aa).

Residues 38-184 (IVKLILKSQE…MACLMRAKNF (147 aa)) enclose the SIS domain. 56 to 61 (GVGKSA) is a binding site for ATP. CBS domains follow at residues 211 to 267 (QTTN…GVSL) and 270 to 329 (EVRH…GLKA).

This sequence belongs to the SIS family. GutQ/KpsF subfamily.

This is an uncharacterized protein from Helicobacter pylori (strain ATCC 700392 / 26695) (Campylobacter pylori).